A 103-amino-acid chain; its full sequence is Nucleoid-associated protein BH0035 (103 aa).

Residues 1-20 (MKNMGQMMKQMQKMQKQMMK) show a composition bias toward low complexity. The disordered stretch occupies residues 1-29 (MKNMGQMMKQMQKMQKQMMKAQEELKEKT).

The protein belongs to the YbaB/EbfC family. In terms of assembly, homodimer.

It is found in the cytoplasm. The protein resides in the nucleoid. Its function is as follows. Binds to DNA and alters its conformation. May be involved in regulation of gene expression, nucleoid organization and DNA protection. In Halalkalibacterium halodurans (strain ATCC BAA-125 / DSM 18197 / FERM 7344 / JCM 9153 / C-125) (Bacillus halodurans), this protein is Nucleoid-associated protein BH0035.